The chain runs to 467 residues: Ethanolamine-phosphate phospho-lyase homolog 1 (467 aa).

At lysine 307 the chain carries N6-(pyridoxal phosphate)lysine.

The protein belongs to the class-III pyridoxal-phosphate-dependent aminotransferase family. Pyridoxal 5'-phosphate serves as cofactor.

In Caenorhabditis elegans, this protein is Ethanolamine-phosphate phospho-lyase homolog 1.